The following is a 362-amino-acid chain: Phosphoserine aminotransferase (362 aa).

Arg43 provides a ligand contact to L-glutamate. Residues 77 to 78 (AT), Trp103, Thr153, Asp173, and Gln196 each bind pyridoxal 5'-phosphate. Lys197 carries the N6-(pyridoxal phosphate)lysine modification. 238-239 (NT) is a binding site for pyridoxal 5'-phosphate.

Belongs to the class-V pyridoxal-phosphate-dependent aminotransferase family. SerC subfamily. As to quaternary structure, homodimer. Pyridoxal 5'-phosphate serves as cofactor.

The protein resides in the cytoplasm. It catalyses the reaction O-phospho-L-serine + 2-oxoglutarate = 3-phosphooxypyruvate + L-glutamate. It carries out the reaction 4-(phosphooxy)-L-threonine + 2-oxoglutarate = (R)-3-hydroxy-2-oxo-4-phosphooxybutanoate + L-glutamate. It functions in the pathway amino-acid biosynthesis; L-serine biosynthesis; L-serine from 3-phospho-D-glycerate: step 2/3. The protein operates within cofactor biosynthesis; pyridoxine 5'-phosphate biosynthesis; pyridoxine 5'-phosphate from D-erythrose 4-phosphate: step 3/5. Functionally, catalyzes the reversible conversion of 3-phosphohydroxypyruvate to phosphoserine and of 3-hydroxy-2-oxo-4-phosphonooxybutanoate to phosphohydroxythreonine. This is Phosphoserine aminotransferase from Acidithiobacillus ferrooxidans (strain ATCC 23270 / DSM 14882 / CIP 104768 / NCIMB 8455) (Ferrobacillus ferrooxidans (strain ATCC 23270)).